We begin with the raw amino-acid sequence, 396 residues long: Elongation factor Tu 2 (396 aa).

Residues 10–206 (KPHVNVGTIG…AIDSYIPEPE (197 aa)) enclose the tr-type G domain. The G1 stretch occupies residues 19–26 (GHIDHGKT). Residue 19 to 26 (GHIDHGKT) coordinates GTP. Thr-26 is a binding site for Mg(2+). The interval 60-64 (GITIA) is G2. The G3 stretch occupies residues 81 to 84 (DCPG). GTP is bound by residues 81–85 (DCPGH) and 136–139 (NKCD). Residues 136–139 (NKCD) are G4. Residues 174 to 176 (SAL) are G5.

This sequence belongs to the TRAFAC class translation factor GTPase superfamily. Classic translation factor GTPase family. EF-Tu/EF-1A subfamily. Monomer.

It is found in the cytoplasm. It catalyses the reaction GTP + H2O = GDP + phosphate + H(+). Functionally, GTP hydrolase that promotes the GTP-dependent binding of aminoacyl-tRNA to the A-site of ribosomes during protein biosynthesis. The protein is Elongation factor Tu 2 of Desulfotalea psychrophila (strain LSv54 / DSM 12343).